The primary structure comprises 417 residues: Methyltransferase/ribosomally synthesized cyclic peptide omphalotin A precursor ophMA (417 aa).

The tract at residues 1 to 251 is methyltransferase domain; that stretch reads METSTQTKAG…GVSTFYIPPK (251 aa). Residues arginine 72, tyrosine 76, and tyrosine 98 contribute to the active site. The S-adenosyl-L-methionine site is built by tyrosine 98, histidine 100, valine 103, alanine 130, glutamine 172, alanine 213, serine 244, and threonine 245. Residues 252 to 378 form a clasp domain region; it reads ARKASNLDII…WAIRCAMKNM (127 aa). Positions 379–399 are precursor leader; that stretch reads PSSLLDAARESGEEASQNGFP. N-methylvaline is present on residues valine 401, valine 403, and valine 404. Position 405 is an N-methylglycine (glycine 405). At valine 406 the chain carries N-methylvaline. At isoleucine 407 the chain carries N-methylisoleucine. Glycine 408 is modified (N-methylglycine). N-methylisoleucine is present on isoleucine 410. Glycine 411 is subject to N-methylglycine. Valine 413 bears the N-methylvaline mark.

It in the N-terminal section; belongs to the precorrin methyltransferase family. As to quaternary structure, homodimer. Post-translationally, ophMA automethylates at Val-401, Val-403, Val-404, Gly-405, Val-406, Ile-407, Gly-408, Ile-410, Gly-411 and Val-413 before being processed by the prolyloligopeptidase ophP which likely forms a peptidyl ester upon removal of the follower propeptide, which then undergoes macrocyclization with the N-terminus of the modified core peptide. Peptide backbone alpha-N-methylations change the physicochemical properties of amide bonds to provide structural constraints and other favorable characteristics including biological membrane permeability to peptides.

It participates in mycotoxin biosynthesis. In terms of biological role, fusion protein of the methyltransferase ophM and the omphalotin core peptide; part of the gene cluster that mediates the biosynthesis of omphalotin A, a highly methylated cyclic dodecapeptide with nematodicidal activity. Omphalotin A derives from the C-terminus of the ophMA protein, and it is the ophMA protein that methylates its own C-terminus using S-adenosyl methionine (SAM). The C-terminus is subsequently cleaved off and macrocyclized by the prolyloligopeptidase ophP to give the final product. The sequence is that of Methyltransferase/ribosomally synthesized cyclic peptide omphalotin A precursor ophMA from Omphalotus olearius (Jack o'lantern).